The primary structure comprises 327 residues: Phosphate acyltransferase (327 aa).

It belongs to the PlsX family. As to quaternary structure, homodimer. Probably interacts with PlsY.

It localises to the cytoplasm. It carries out the reaction a fatty acyl-[ACP] + phosphate = an acyl phosphate + holo-[ACP]. The protein operates within lipid metabolism; phospholipid metabolism. Catalyzes the reversible formation of acyl-phosphate (acyl-PO(4)) from acyl-[acyl-carrier-protein] (acyl-ACP). This enzyme utilizes acyl-ACP as fatty acyl donor, but not acyl-CoA. This Thermotoga neapolitana (strain ATCC 49049 / DSM 4359 / NBRC 107923 / NS-E) protein is Phosphate acyltransferase.